Reading from the N-terminus, the 422-residue chain is Ubiquitin-conjugating enzyme E2 Q1 (422 aa).

Met-1 is subject to N-acetylmethionine. Residues 1-15 (MQQPQPQGQQQPGPG) show a composition bias toward low complexity. 2 disordered regions span residues 1 to 40 (MQQPQPQGQQQPGPGQQLGGQGAAPGAGGGPGGGPGPGPC) and 174 to 221 (PLPA…EDDG). The span at 16 to 35 (QQLGGQGAAPGAGGGPGGGP) shows a compositional bias: gly residues. A compositionally biased stretch (acidic residues) spans 185–200 (VSSEDEDEEMPEDTED). Residues 212-221 (AEGKKSEDDG) are compositionally biased toward basic and acidic residues. The UBC core domain occupies 251–415 (QATDRLMKEL…VQIHEKNGWY (165 aa)). The active-site Glycyl thioester intermediate is the Cys-351.

This sequence belongs to the ubiquitin-conjugating enzyme family. As to quaternary structure, monomer and homodimer. Only the homodimer is linked to ubiquitin through thiolester activation. Interacts (via N-terminus) with B4GALT1 (via N-terminal cytoplasmic domain). The interaction is direct. In terms of processing, autoubiquitinated in vitro in the presence of NEDD4L. As to expression, widely expressed.

The protein resides in the nucleus. It localises to the cell projection. The protein localises to the filopodium. It is found in the cytoplasm. Its subcellular location is the cytosol. It catalyses the reaction S-ubiquitinyl-[E1 ubiquitin-activating enzyme]-L-cysteine + [E2 ubiquitin-conjugating enzyme]-L-cysteine = [E1 ubiquitin-activating enzyme]-L-cysteine + S-ubiquitinyl-[E2 ubiquitin-conjugating enzyme]-L-cysteine.. It functions in the pathway protein modification; protein ubiquitination. Functionally, catalyzes the covalent attachment of ubiquitin to other proteins. May be involved in hormonal homeostasis in females. Involved in regulation of B4GALT1 cell surface expression, B4GALT1-mediated cell adhesion to laminin and embryoid body formation. This Homo sapiens (Human) protein is Ubiquitin-conjugating enzyme E2 Q1 (UBE2Q1).